Reading from the N-terminus, the 139-residue chain is Large ribosomal subunit protein uL16 (139 aa).

A compositionally biased stretch (basic residues) spans 1-21; the sequence is MLSPRKTKFRKQHRGRMRGKA. Residues 1–23 are disordered; sequence MLSPRKTKFRKQHRGRMRGKATR.

The protein belongs to the universal ribosomal protein uL16 family. As to quaternary structure, part of the 50S ribosomal subunit.

In terms of biological role, binds 23S rRNA and is also seen to make contacts with the A and possibly P site tRNAs. The chain is Large ribosomal subunit protein uL16 from Acaryochloris marina (strain MBIC 11017).